The primary structure comprises 594 residues: Elongation factor 4 (594 aa).

The tr-type G domain occupies 2-184 (KNIRNFSIIA…TIVAKVPAPE (183 aa)). GTP is bound by residues 14–19 (DHGKST) and 131–134 (NKID).

This sequence belongs to the TRAFAC class translation factor GTPase superfamily. Classic translation factor GTPase family. LepA subfamily.

The protein resides in the cell inner membrane. The catalysed reaction is GTP + H2O = GDP + phosphate + H(+). In terms of biological role, required for accurate and efficient protein synthesis under certain stress conditions. May act as a fidelity factor of the translation reaction, by catalyzing a one-codon backward translocation of tRNAs on improperly translocated ribosomes. Back-translocation proceeds from a post-translocation (POST) complex to a pre-translocation (PRE) complex, thus giving elongation factor G a second chance to translocate the tRNAs correctly. Binds to ribosomes in a GTP-dependent manner. This Francisella tularensis subsp. novicida (strain U112) protein is Elongation factor 4.